Reading from the N-terminus, the 330-residue chain is Cytoskeleton protein RodZ (330 aa).

Residues 1-111 lie on the Cytoplasmic side of the membrane; the sequence is MNTEATQDHQ…LGKRRKKRDG (111 aa). An HTH cro/C1-type domain is found at 19–71; it reads LRHAREQLGLSQQAVAERLCLKVSTVRDIEDDKAPADLASTFLRGYIRSYARL. A DNA-binding region (H-T-H motif) is located at residues 30 to 49; the sequence is QQAVAERLCLKVSTVRDIED. Residues 112-132 traverse the membrane as a helical; Signal-anchor for type II membrane protein segment; that stretch reads WLMSFTWLVLFVVIGLSGAWW. Topologically, residues 133–330 are periplasmic; sequence WQDHKAQQEE…TLNAEQSPAQ (198 aa). Over residues 146-166 the composition is skewed to polar residues; it reads MADQSSAELNGGDANSQNVPL. The disordered stretch occupies residues 146 to 237; it reads MADQSSAELN…ASPLPTDQAN (92 aa). Low complexity-rich tracts occupy residues 176–202 and 216–233; these read TDSA…TPAD and TAGT…PLPT.

This sequence belongs to the RodZ family.

It is found in the cell inner membrane. Functionally, cytoskeletal protein that is involved in cell-shape control through regulation of the length of the long axis. The chain is Cytoskeleton protein RodZ from Klebsiella pneumoniae (strain 342).